The primary structure comprises 598 residues: Aspartate--tRNA(Asp/Asn) ligase (598 aa).

Glutamate 182 is an L-aspartate binding site. The interval glutamine 206–lysine 209 is aspartate. L-aspartate is bound at residue arginine 228. Residues arginine 228–glutamate 230 and glutamine 237 contribute to the ATP site. Histidine 456 is an L-aspartate binding site. Glutamate 490 contributes to the ATP binding site. Residue arginine 497 participates in L-aspartate binding. Position 542–545 (glycine 542–arginine 545) interacts with ATP.

This sequence belongs to the class-II aminoacyl-tRNA synthetase family. Type 1 subfamily. As to quaternary structure, homodimer.

It localises to the cytoplasm. It catalyses the reaction tRNA(Asx) + L-aspartate + ATP = L-aspartyl-tRNA(Asx) + AMP + diphosphate. In terms of biological role, aspartyl-tRNA synthetase with relaxed tRNA specificity since it is able to aspartylate not only its cognate tRNA(Asp) but also tRNA(Asn). Reaction proceeds in two steps: L-aspartate is first activated by ATP to form Asp-AMP and then transferred to the acceptor end of tRNA(Asp/Asn). The protein is Aspartate--tRNA(Asp/Asn) ligase of Lachnoclostridium phytofermentans (strain ATCC 700394 / DSM 18823 / ISDg) (Clostridium phytofermentans).